The chain runs to 116 residues: U11-theraphotoxin-Hhn1c (116 aa).

A signal peptide spans Met1 to Ala21. The propeptide occupies Asp22–Arg74. Residues Glu61 to Asp83 form a disordered region. Disulfide bonds link Cys75–Cys90, Cys82–Cys95, and Cys89–Cys110.

This sequence belongs to the neurotoxin 14 (magi-1) family. 01 (HNTX-16) subfamily. In terms of tissue distribution, expressed by the venom gland.

The protein resides in the secreted. Functionally, probable ion channel inhibitor. In Cyriopagopus hainanus (Chinese bird spider), this protein is U11-theraphotoxin-Hhn1c.